The sequence spans 416 residues: Squamosa promoter-binding-like protein 8 (416 aa).

Residues 11–53 (SSCDDFGYNATPPPPPSLLPIMDQDGGGGSIQRDHHHHHNHQQ) are disordered. Residues 182–260 (PPRCQAEGCK…ADHNRRRRKS (79 aa)) form an SBP-type zinc finger. The Zn(2+) site is built by Cys185, Cys190, Cys207, His210, Cys227, Cys230, His234, and Cys246. The Bipartite nuclear localization signal signature appears at 243-259 (KKSCRKRLADHNRRRRK). The segment at 250–299 (LADHNRRRRKSKPSDGEHSGEKRRAQANKSAATKDKAGSSSKNAGIGDGF) is disordered. The segment covering 261–273 (KPSDGEHSGEKRR) has biased composition (basic and acidic residues).

Expressed in stems, leaf sheaths, and young panicles.

The protein resides in the nucleus. Its function is as follows. Probable transcription factor that plays an important role in building the laminar joint between leaf blade and leaf sheath boundary, thereby controlling ligule and auricle development. The protein is Squamosa promoter-binding-like protein 8 (SPL8) of Oryza sativa subsp. indica (Rice).